We begin with the raw amino-acid sequence, 479 residues long: Trigger factor (479 aa).

The PPIase FKBP-type domain occupies Gly174–Pro261. The segment at Val438 to Ser479 is disordered. Positions Lys453–Thr464 are enriched in basic residues. The segment covering Asn468 to Ser479 has biased composition (basic and acidic residues).

Belongs to the FKBP-type PPIase family. Tig subfamily.

The protein localises to the cytoplasm. The enzyme catalyses [protein]-peptidylproline (omega=180) = [protein]-peptidylproline (omega=0). Involved in protein export. Acts as a chaperone by maintaining the newly synthesized protein in an open conformation. Functions as a peptidyl-prolyl cis-trans isomerase. This is Trigger factor from Prochlorococcus marinus (strain MIT 9313).